The chain runs to 265 residues: Uridylate kinase (265 aa).

Residues 1 to 29 (MTESREPHVAGSAAPRPEPANGLASGQPS) are disordered. ATP is bound at residue 40 to 43 (KLGG). Glycine 81 lines the UMP pocket. Positions 82 and 86 each coordinate ATP. Residues aspartate 101 and 162 to 169 (MGLPYFST) each bind UMP. Residues phenylalanine 195 and aspartate 198 each coordinate ATP.

The protein belongs to the UMP kinase family. Homohexamer.

The protein localises to the cytoplasm. It catalyses the reaction UMP + ATP = UDP + ADP. Its pathway is pyrimidine metabolism; CTP biosynthesis via de novo pathway; UDP from UMP (UMPK route): step 1/1. Its activity is regulated as follows. Inhibited by UTP. In terms of biological role, catalyzes the reversible phosphorylation of UMP to UDP. The chain is Uridylate kinase from Mycobacterium avium (strain 104).